The sequence spans 920 residues: Bifunctional aspartokinase/homoserine dehydrogenase 1, chloroplastic (920 aa).

Residues 1 to 21 form a disordered region; sequence MRSLTVASRHPGAAFSTRRRP. Residues 1 to 92 constitute a chloroplast transit peptide; that stretch reads MRSLTVASRH…EAIADLPKGD (92 aa). The interval 93–341 is aspartokinase; it reads MWSVHKFGGT…VSEAVILSTL (249 aa). Residues 342–566 are interface; the sequence is SYQEAWEMSY…LSKTTLAVGI (225 aa). 2 ACT domains span residues 416–491 and 497–574; these read VEGT…VIHN and TVGL…LIGR. The homoserine dehydrogenase stretch occupies residues 567-920; sequence IGPGLIGRTL…RLSSYLGAPS (354 aa). 2 residues coordinate NAD(+): isoleucine 572 and alanine 601. Residue isoleucine 572 participates in NADP(+) binding. Position 572 (isoleucine 572) interacts with NADPH. NADP(+)-binding residues include arginine 604, threonine 653, and lysine 677. Threonine 653 contacts NAD(+). 2 residues coordinate NADPH: threonine 653 and lysine 677. 4 residues coordinate Na(+): glutamate 704, valine 707, alanine 709, and leucine 711. 2 residues coordinate NADP(+): glycine 762 and glutamate 765. L-homoserine is bound by residues glutamate 765 and aspartate 776. The Proton donor role is filled by lysine 780. Residue glycine 897 coordinates NAD(+). Residue glycine 897 participates in NADP(+) binding. Glycine 897 provides a ligand contact to NADPH.

The protein in the N-terminal section; belongs to the aspartokinase family. In the C-terminal section; belongs to the homoserine dehydrogenase family. Homo- or heterodimer. The cofactor is a metal cation.

The protein localises to the plastid. It localises to the chloroplast. The catalysed reaction is L-homoserine + NADP(+) = L-aspartate 4-semialdehyde + NADPH + H(+). The enzyme catalyses L-homoserine + NAD(+) = L-aspartate 4-semialdehyde + NADH + H(+). It catalyses the reaction L-aspartate + ATP = 4-phospho-L-aspartate + ADP. It participates in amino-acid biosynthesis; L-lysine biosynthesis via DAP pathway; (S)-tetrahydrodipicolinate from L-aspartate: step 1/4. Its pathway is amino-acid biosynthesis; L-methionine biosynthesis via de novo pathway; L-homoserine from L-aspartate: step 1/3. The protein operates within amino-acid biosynthesis; L-methionine biosynthesis via de novo pathway; L-homoserine from L-aspartate: step 3/3. It functions in the pathway amino-acid biosynthesis; L-threonine biosynthesis; L-threonine from L-aspartate: step 1/5. It participates in amino-acid biosynthesis; L-threonine biosynthesis; L-threonine from L-aspartate: step 3/5. In terms of biological role, bifunctional aspartate kinase and homoserine dehydrogenase that catalyzes the first and the third steps toward the synthesis of lysine, methionine and threonine from aspartate. The protein is Bifunctional aspartokinase/homoserine dehydrogenase 1, chloroplastic (AKHSDH1) of Zea mays (Maize).